Consider the following 123-residue polypeptide: Fluoride-specific ion channel FluC (123 aa).

4 helical membrane-spanning segments follow: residues 7–27 (LLLIIGGGLGALARYYISGIL), 39–59 (LVNSIASFILGYLYGLLFFGF), 67–87 (IFLGTGFCGGLSTFSTFSYET), and 100–120 (FMNVVANVLVTITLVFLGFIL). Na(+) is bound by residues Gly-75 and Ser-78.

The protein belongs to the fluoride channel Fluc/FEX (TC 1.A.43) family.

It is found in the cell membrane. The catalysed reaction is fluoride(in) = fluoride(out). With respect to regulation, na(+) is not transported, but it plays an essential structural role and its presence is essential for fluoride channel function. In terms of biological role, fluoride-specific ion channel. Important for reducing fluoride concentration in the cell, thus reducing its toxicity. The sequence is that of Fluoride-specific ion channel FluC from Pyrococcus abyssi (strain GE5 / Orsay).